Consider the following 323-residue polypeptide: Viral cathepsin (323 aa).

Residues 1–16 form the signal peptide; the sequence is MNKILFYLFVYGVVNS. Positions 17–112 are cleaved as a propeptide — activation peptide; sequence AAYDLLKAPN…IVLDQPPGKG (96 aa). 3 cysteine pairs are disulfide-bonded: Cys-133–Cys-174, Cys-167–Cys-207, and Cys-262–Cys-310. Cys-136 is a catalytic residue. Asn-158 carries an N-linked (GlcNAc...) asparagine; by host glycan. Active-site residues include His-269 and Asn-289.

It belongs to the peptidase C1 family. As to quaternary structure, interacts with chitinase/CHIA; this interaction maintains VCATH in the host endoplasmic reticulum. Synthesized as an inactive proenzyme and activated by proteolytic removal of the inhibitory propeptide.

It is found in the host endoplasmic reticulum. The catalysed reaction is Endopeptidase of broad specificity, hydrolyzing substrates of both cathepsin L and cathepsin B.. Cysteine protease that plays an essential role in host liquefaction to facilitate horizontal transmission of the virus. Accumulates within infected cells as an inactive proenzyme (proV-CATH), which is activated by proteolytic cleavage upon cell death. In Lepidoptera (butterflies and moths), this protein is Viral cathepsin (VCATH).